The primary structure comprises 662 residues: Methyl-accepting chemotaxis protein McpB (662 aa).

Topologically, residues 1–16 are cytoplasmic; the sequence is MKTFINWLKKPSISKK. Residues 17-37 form a helical membrane-spanning segment; it reads LIVSFIAILIIPILILEFSSY. Residues 38–282 are Extracellular-facing; the sequence is RSASGKLDQE…IKDASKSVLT (245 aa). Residues 153–229 form the Cache domain; it reads VTDPYVAASD…KAGEKLSGDW (77 aa). A helical transmembrane segment spans residues 283–303; the sequence is TGMIVLIASIVAGGILILFIV. The HAMP domain maps to 304 to 356; sequence RSITKPLKRLVQSSKTISRGDLTETIEIHSKDELGELGESFNEMGQSLRSLIS. The Cytoplasmic portion of the chain corresponds to 304-662; it reads RSITKPLKRL…RDLTKQFKIE (359 aa). Glutamate methyl ester (Gln) occurs at positions 371 and 595. Positions 375 to 611 constitute a Methyl-accepting transducer domain; the sequence is SAGQTSKATE…HVSAAVSGIA (237 aa). 2 positions are modified to glutamate methyl ester (Glu): E630 and E637.

This sequence belongs to the methyl-accepting chemotaxis (MCP) protein family. As to quaternary structure, interacts with FloT. In terms of processing, some glutamine residues are deamidated to glutamate by CheD and subsequently methylated. The demethylation is selective. Gln-371 is demethylated only upon asparagine addition whereas Glu-637 is demethylated only upon asparagine removal. Glu-630 appears indiscriminate and is demethylated upon both addition and removal of asparagine.

The protein localises to the cell membrane. The protein resides in the membrane raft. In terms of biological role, chemotactic-signal transducers respond to changes in the concentration of attractants and repellents in the environment, transduce a signal from the outside to the inside of the cell, and facilitate sensory adaptation through the variation of the level of methylation. All amino acids serve as attractants in B.subtilis, they appear to cause an increase in the turnover methyl groups, leading to methylation of an unidentified acceptor, while repellents have been shown to cause a decrease in methyl group turnover. The methyl groups are added by a methyltransferase and removed by a methylesterase. McpB is required for taxis towards asparagine, aspartate, glutamine, and histidine. In Bacillus subtilis (strain 168), this protein is Methyl-accepting chemotaxis protein McpB (mcpB).